Consider the following 77-residue polypeptide: MATVIRLTRLGRKKKPFYRMVVTDSRKRRDGGWVEAIGYYNPLAETPVVKFDAERLKYWVSVGAKMSDRVATLTASK.

It belongs to the bacterial ribosomal protein bS16 family.

In Wolinella succinogenes (strain ATCC 29543 / DSM 1740 / CCUG 13145 / JCM 31913 / LMG 7466 / NCTC 11488 / FDC 602W) (Vibrio succinogenes), this protein is Small ribosomal subunit protein bS16.